A 190-amino-acid polypeptide reads, in one-letter code: Putative cyclic ADP-D-ribose synthase ThsB (190 aa).

It belongs to the Thoeris B TIR-like family. As to quaternary structure, homodimer.

Its subcellular location is the cytoplasm. Activated upon phage infection. TIR-like domain-containing component of the Thoeris antiviral defense system, composed of ThsA and ThsB. Expression of ThsA and ThsB in B.subtilis (strain BEST7003) confers resistance to phages SBSphiC, SBSphiJ and SPO1. Phage infection activates this protein, generating a signal molecule that in turn activates ThsA. Its function is as follows. Probably hydrolyzes NAD(+) to make a cyclic ADP-D-ribose (cADPR) signaling molecule; might make 3'cADPR. This chain is Putative cyclic ADP-D-ribose synthase ThsB, found in Bacillus amyloliquefaciens (strain Y2) (Bacillus amyloliquefaciens subsp. plantarum (strain B9601-Y2)).